An 81-amino-acid polypeptide reads, in one-letter code: MKTLLLTLVVVTIVCLDLGYTLKCNKLVPLFYKTCPAGKNLCYKMFMVATPKVPVKRGCIDVCPKNSLLVKYVCCNTDRCN.

Positions 1–21 (MKTLLLTLVVVTIVCLDLGYT) are cleaved as a signal peptide. Cystine bridges form between C24/C42, C35/C59, C63/C74, and C75/C80.

It belongs to the three-finger toxin family. Short-chain subfamily. Type IA cytotoxin sub-subfamily. In terms of assembly, monomer in solution; Homodimer and oligomer in the presence of negatively charged lipids forming a pore with a size ranging between 20 and 30 Angstroms. Expressed by the venom gland.

It is found in the secreted. Its subcellular location is the target cell membrane. Its function is as follows. Shows cytolytic activity on many different cells by forming pore in lipid membranes. In vivo, increases heart rate or kills the animal by cardiac arrest. In addition, it binds to heparin with high affinity, interacts with Kv channel-interacting protein 1 (KCNIP1) in a calcium-independent manner, and binds to integrin alpha-V/beta-3 (ITGAV/ITGB3) with moderate affinity. The protein is Cytotoxin 3a of Naja atra (Chinese cobra).